Here is a 378-residue protein sequence, read N- to C-terminus: MKFELKTTDGRARRGQLVFERGTVQTPAFMPVGTYGTVKGMTPEEVRETGAQILLGNTFHLWLRPGQEVMRAHGDLHDFMNWQGPILTDSGGFQVFSLGHIRKITEAGVHFRHPINGEKIFLDPEKSMEIQYDLGSDIVMIFDECTPYPATYEEARKSMEMSLRWGKRSRDKFDALGNKNALFGIIQGSVYEDLRDVSLDGLLEIGFDGYAVGGLAVGEPKEDMHRILEHVCPKIPADKPRYLMGVGKPEDLVEGVRRGIDMFDCVMPTRNARNGHLFTTDGVVKIRNAKYREDTSTLDADCDCYTCKNYTRSYLYHLDKCNEILGARLNTIHNLRYYQRVMQGLRDAIEQGKLDDFVTEFYRRQGKPVPPLAENDVK.

The Proton acceptor role is filled by aspartate 89. Substrate contacts are provided by residues 89–93, aspartate 143, glutamine 187, and glycine 214; that span reads DSGGF. An RNA binding region spans residues 245 to 251; that stretch reads GVGKPED. Aspartate 264 functions as the Nucleophile in the catalytic mechanism. The tract at residues 269–273 is RNA binding; important for wobble base 34 recognition; sequence TRNAR. Cysteine 302, cysteine 304, cysteine 307, and histidine 333 together coordinate Zn(2+).

Belongs to the queuine tRNA-ribosyltransferase family. In terms of assembly, homodimer. Within each dimer, one monomer is responsible for RNA recognition and catalysis, while the other monomer binds to the replacement base PreQ1. The cofactor is Zn(2+).

The catalysed reaction is 7-aminomethyl-7-carbaguanine + guanosine(34) in tRNA = 7-aminomethyl-7-carbaguanosine(34) in tRNA + guanine. The protein operates within tRNA modification; tRNA-queuosine biosynthesis. In terms of biological role, catalyzes the base-exchange of a guanine (G) residue with the queuine precursor 7-aminomethyl-7-deazaguanine (PreQ1) at position 34 (anticodon wobble position) in tRNAs with GU(N) anticodons (tRNA-Asp, -Asn, -His and -Tyr). Catalysis occurs through a double-displacement mechanism. The nucleophile active site attacks the C1' of nucleotide 34 to detach the guanine base from the RNA, forming a covalent enzyme-RNA intermediate. The proton acceptor active site deprotonates the incoming PreQ1, allowing a nucleophilic attack on the C1' of the ribose to form the product. After dissociation, two additional enzymatic reactions on the tRNA convert PreQ1 to queuine (Q), resulting in the hypermodified nucleoside queuosine (7-(((4,5-cis-dihydroxy-2-cyclopenten-1-yl)amino)methyl)-7-deazaguanosine). The chain is Queuine tRNA-ribosyltransferase from Aeromonas hydrophila subsp. hydrophila (strain ATCC 7966 / DSM 30187 / BCRC 13018 / CCUG 14551 / JCM 1027 / KCTC 2358 / NCIMB 9240 / NCTC 8049).